A 384-amino-acid polypeptide reads, in one-letter code: Dual-specificity RNA methyltransferase RlmN (384 aa).

Glu-105 (proton acceptor) is an active-site residue. A Radical SAM core domain is found at 111–350 (EVDRATLCVS…TIVRKTRGDD (240 aa)). Residues Cys-118 and Cys-355 are joined by a disulfide bond. Cys-125, Cys-129, and Cys-132 together coordinate [4Fe-4S] cluster. S-adenosyl-L-methionine-binding positions include 179–180 (GE), Ser-211, 233–235 (SLH), and Asn-312. Cys-355 acts as the S-methylcysteine intermediate in catalysis.

It belongs to the radical SAM superfamily. RlmN family. It depends on [4Fe-4S] cluster as a cofactor.

Its subcellular location is the cytoplasm. The enzyme catalyses adenosine(2503) in 23S rRNA + 2 reduced [2Fe-2S]-[ferredoxin] + 2 S-adenosyl-L-methionine = 2-methyladenosine(2503) in 23S rRNA + 5'-deoxyadenosine + L-methionine + 2 oxidized [2Fe-2S]-[ferredoxin] + S-adenosyl-L-homocysteine. It carries out the reaction adenosine(37) in tRNA + 2 reduced [2Fe-2S]-[ferredoxin] + 2 S-adenosyl-L-methionine = 2-methyladenosine(37) in tRNA + 5'-deoxyadenosine + L-methionine + 2 oxidized [2Fe-2S]-[ferredoxin] + S-adenosyl-L-homocysteine. In terms of biological role, specifically methylates position 2 of adenine 2503 in 23S rRNA and position 2 of adenine 37 in tRNAs. m2A2503 modification seems to play a crucial role in the proofreading step occurring at the peptidyl transferase center and thus would serve to optimize ribosomal fidelity. The protein is Dual-specificity RNA methyltransferase RlmN of Escherichia coli O9:H4 (strain HS).